The primary structure comprises 350 residues: Nicotinate-nucleotide--dimethylbenzimidazole phosphoribosyltransferase (350 aa).

E318 serves as the catalytic Proton acceptor.

Belongs to the CobT family.

It catalyses the reaction 5,6-dimethylbenzimidazole + nicotinate beta-D-ribonucleotide = alpha-ribazole 5'-phosphate + nicotinate + H(+). It functions in the pathway nucleoside biosynthesis; alpha-ribazole biosynthesis; alpha-ribazole from 5,6-dimethylbenzimidazole: step 1/2. Its function is as follows. Catalyzes the synthesis of alpha-ribazole-5'-phosphate from nicotinate mononucleotide (NAMN) and 5,6-dimethylbenzimidazole (DMB). This is Nicotinate-nucleotide--dimethylbenzimidazole phosphoribosyltransferase from Citrifermentans bemidjiense (strain ATCC BAA-1014 / DSM 16622 / JCM 12645 / Bem) (Geobacter bemidjiensis).